The sequence spans 324 residues: ATP-dependent 6-phosphofructokinase (324 aa).

Residue glycine 11 participates in ATP binding. ADP is bound at residue 21–25 (RAVVR). Residues 72 to 73 (RE) and 102 to 105 (GNGS) contribute to the ATP site. Residue asparagine 103 coordinates Mg(2+). 126–128 (TID) contacts substrate. Aspartate 128 (proton acceptor) is an active-site residue. Lysine 155 serves as a coordination point for ADP. Substrate is bound by residues arginine 163 and 170-172 (MGR). ADP is bound by residues 186 to 188 (GAE) and 214 to 216 (KNF). Residues glutamate 223, arginine 248, and 254 to 257 (YIQR) contribute to the substrate site.

It belongs to the phosphofructokinase type A (PFKA) family. ATP-dependent PFK group I subfamily. Prokaryotic clade 'B1' sub-subfamily. Homotetramer. Mg(2+) serves as cofactor.

Its subcellular location is the cytoplasm. The catalysed reaction is beta-D-fructose 6-phosphate + ATP = beta-D-fructose 1,6-bisphosphate + ADP + H(+). The protein operates within carbohydrate degradation; glycolysis; D-glyceraldehyde 3-phosphate and glycerone phosphate from D-glucose: step 3/4. With respect to regulation, allosterically activated by ADP and other diphosphonucleosides, and allosterically inhibited by phosphoenolpyruvate. Functionally, catalyzes the phosphorylation of D-fructose 6-phosphate to fructose 1,6-bisphosphate by ATP, the first committing step of glycolysis. This Sulfurihydrogenibium sp. (strain YO3AOP1) protein is ATP-dependent 6-phosphofructokinase.